The sequence spans 372 residues: Histidine protein methyltransferase 1 homolog (372 aa).

2 disordered regions span residues 30 to 55 (SKEL…QFDL) and 68 to 103 (NAAP…AKEH). Residues 39–49 (QKGEERDRKCS) are compositionally biased toward basic and acidic residues. Polar residues predominate over residues 70-87 (APSQDTDSPLSAASSSRN). Residues serine 72 and serine 77 each carry the phosphoserine modification. Position 154 is a tele-methylhistidine; by autocatalysis (histidine 154). S-adenosyl-L-methionine contacts are provided by residues 168–172 (IWECT), glycine 195, and 216–218 (QDY). The Nuclear localization signal motif lies at 247–253 (PDVKRCR). S-adenosyl-L-methionine contacts are provided by residues 268-270 (GEW) and serine 293.

Belongs to the methyltransferase superfamily. METTL18 family. As to quaternary structure, interacts with GRWD1 and members of the heat shock protein 90 and 70 families; these proteins may possibly be methylation substrates for the enzyme. In terms of processing, monomethylated at His-154 through automethylation. Automethylation at His-154 positively regulates the methyltransferase activity toward RPL3. Probably methylated on other residues.

The protein resides in the cytoplasm. Its subcellular location is the cytosol. The protein localises to the nucleus. It is found in the nucleolus. It carries out the reaction L-histidyl-[protein] + S-adenosyl-L-methionine = N(tele)-methyl-L-histidyl-[protein] + S-adenosyl-L-homocysteine + H(+). In terms of biological role, protein-L-histidine N-tele-methyltransferase that specifically monomethylates RPL3, thereby regulating translation elongation. Histidine methylation of RPL3 regulates translation elongation by slowing ribosome traversal on tyrosine codons: slower elongation provides enough time for proper folding of synthesized proteins and prevents cellular aggregation of tyrosine-rich proteins. This is Histidine protein methyltransferase 1 homolog from Homo sapiens (Human).